The primary structure comprises 163 residues: Nucleotide-binding protein MT0592 (163 aa).

This sequence belongs to the YajQ family.

In terms of biological role, nucleotide-binding protein. This is Nucleotide-binding protein MT0592 from Mycobacterium tuberculosis (strain CDC 1551 / Oshkosh).